The primary structure comprises 839 residues: uncharacterized protein (839 aa).

Disordered stretches follow at residues 504-611 (TVSP…NVVN), 627-646 (KNNN…DNHC), and 682-839 (NHNY…SLGS). The segment covering 509–611 (GNNNVTGDVD…EGSNNCNVVN (103 aa)) has biased composition (low complexity). Basic and acidic residues predominate over residues 636-646 (NEYKNSNDNHC). 2 stretches are compositionally biased toward low complexity: residues 689–704 (NGNN…NNNN) and 713–753 (QQQP…NNNK). Residues 726-764 (QQSQQQPQLQQKKQQIQEEQQNLNNNNKSIEDDEEAFNS) are a coiled coil. A compositionally biased stretch (basic and acidic residues) spans 765-776 (DDEHDHEDDSIR). Acidic residues predominate over residues 809 to 823 (EDNDDDSDISDSDSD).

This is an uncharacterized protein from Dictyostelium discoideum (Social amoeba).